We begin with the raw amino-acid sequence, 366 residues long: D-alanine--D-alanine ligase (366 aa).

Residues 144-347 (KRLLKDAGLK…YRELIENLIE (204 aa)) form the ATP-grasp domain. Position 174–229 (174–229 (KEELGLPMFIKPANQGSSVGVHKVENEEQFYSAIKDAFQFDHKLLVEEAIVGREIE)) interacts with ATP. Residues Asp-301, Glu-314, and Asn-316 each contribute to the Mg(2+) site.

The protein belongs to the D-alanine--D-alanine ligase family. Requires Mg(2+) as cofactor. The cofactor is Mn(2+).

The protein localises to the cytoplasm. It carries out the reaction 2 D-alanine + ATP = D-alanyl-D-alanine + ADP + phosphate + H(+). Its pathway is cell wall biogenesis; peptidoglycan biosynthesis. Functionally, cell wall formation. This is D-alanine--D-alanine ligase from Oceanobacillus iheyensis (strain DSM 14371 / CIP 107618 / JCM 11309 / KCTC 3954 / HTE831).